A 129-amino-acid polypeptide reads, in one-letter code: Transcription factor bHLH138 (129 aa).

The span at 1 to 18 (MERYTKKNERFKAEEGKG) shows a compositional bias: basic and acidic residues. The disordered stretch occupies residues 1–24 (MERYTKKNERFKAEEGKGSKKSRT). The bHLH domain maps to 19 to 68 (SKKSRTFLTERERRALFNDRFFDLKNLIPNPTKGGEASIVQDGIVYINEL).

Belongs to the bHLH protein family.

The protein resides in the nucleus. The polypeptide is Transcription factor bHLH138 (Arabidopsis thaliana (Mouse-ear cress)).